The primary structure comprises 57 residues: uncharacterized protein (57 aa).

The chain crosses the membrane as a helical span at residues 34–54 (AALLDAAALVVIPGLLTAAAV).

It localises to the membrane. This is an uncharacterized protein from Dictyostelium discoideum (Social amoeba).